The following is a 240-amino-acid chain: Probable septum site-determining protein MinC (240 aa).

Belongs to the MinC family. Interacts with MinD and FtsZ.

In terms of biological role, cell division inhibitor that blocks the formation of polar Z ring septums. Rapidly oscillates between the poles of the cell to destabilize FtsZ filaments that have formed before they mature into polar Z rings. Prevents FtsZ polymerization. This chain is Probable septum site-determining protein MinC, found in Acinetobacter baumannii (strain AYE).